A 452-amino-acid chain; its full sequence is Down-regulator of invasive growth 1 (452 aa).

Disordered regions lie at residues 1–145 (MAVS…SAPA) and 262–311 (RNKR…ADLR). 2 stretches are compositionally biased toward polar residues: residues 12-22 (EDTSIAKSTQD) and 35-53 (KGSS…SVGQ). The residue at position 45 (Ser-45) is a Phosphoserine. A compositionally biased stretch (acidic residues) spans 61-77 (PEEDDSGDKEADHEDSE). A compositionally biased stretch (basic residues) spans 81–100 (AKKRKAQPLKNPKKSLKRGR). Polar residues-rich tracts occupy residues 107–116 (LSDSNTNTHG), 124–145 (LASS…SAPA), 269–281 (SYDS…ASTG), and 291–307 (RNSS…TQQR). Ser-126, Ser-142, Ser-272, and Ser-275 each carry phosphoserine. Positions 212 to 452 (IPPPHMLNKP…KSSSHHRTGK (241 aa)) are interaction with FUS3 and KSS1. The residue at position 330 (Ser-330) is a Phosphoserine. A compositionally biased stretch (low complexity) spans 331-348 (ANTKARSASTSTSTSTST). The segment at 331–395 (ANTKARSAST…QRTSQPQQQS (65 aa)) is disordered. The span at 349–361 (NRDRSSWHEAEPN) shows a compositional bias: basic and acidic residues. The span at 362–372 (KDEEEGTDLAI) shows a compositional bias: acidic residues. Residues 378 to 395 (PTPTFTTFQRTSQPQQQS) show a composition bias toward low complexity. A Phosphothreonine modification is found at Thr-379. A phosphoserine mark is found at Ser-395 and Ser-428.

Forms a complex with DIG2, STE12 and either FUS3 or KSS1. The interaction of FUS3 with STE12 depends on the presence of both DIG1 and DIG2. STE12 is lost from FUS3/DIG1/DIG2 complex after pheromone treatment. DIG1 and DIG2 have also been reported to interact with CLN1 and CLN2. Phosphorylated by FUS3 and KSS1, in a pheromone-stimulated manner. Phosphorylation reduces the affinity for STE12.

The protein localises to the nucleus. Functionally, DIG1 and DIG2 are negative regulators of the filamentation and pheromone induced mating program. DIG1 and DIG2 inhibit the transcriptional activity of STE12 by direct protein-protein interaction. DIG1 colocalizes to promoters with STE12 and redistributes with it during induction of filamentation (by butanol) or mating (by pheromone) to program specific genes, but binding of DIG1 to STE12 is reduced by pheromone treatment. The protein is Down-regulator of invasive growth 1 (DIG1) of Saccharomyces cerevisiae (strain ATCC 204508 / S288c) (Baker's yeast).